Here is a 214-residue protein sequence, read N- to C-terminus: Quinolone resistance pentapeptide repeat protein QnrB96 (214 aa).

2 consecutive Pentapeptide repeat domains span residues 23 to 103 (STFH…SFMN) and 116 to 189 (ITNT…VRGV).

It belongs to the pentapeptide repeat protein family.

In terms of biological role, confers reduced sensitivity to the fluoroquinolone antibiotic ciprofloxacin (five-fold increase in minimum inhibitory concentration) when expressed in E.coli. The sequence is that of Quinolone resistance pentapeptide repeat protein QnrB96 from Scandinavium goeteborgense.